The following is a 152-amino-acid chain: Actin-depolymerizing factor 2, isoform c (152 aa).

Positions 4–147 (GVKVDPSCKN…DEKSVKSDLM (144 aa)) constitute an ADF-H domain.

It belongs to the actin-binding proteins ADF family.

Functionally, depolymerizes growing actin filaments in muscle cells; required for the assembly of actin filaments into the functional contractile myofilament lattice of muscle. This chain is Actin-depolymerizing factor 2, isoform c, found in Caenorhabditis elegans.